Reading from the N-terminus, the 22-residue chain is Putative lactoylglutathione lyase (22 aa).

Positions 1–22 are disordered; the sequence is ITACLDPDGWKEPGPLPGISTK. E12 acts as the Proton donor/acceptor in catalysis.

This sequence belongs to the glyoxalase I family. Zn(2+) serves as cofactor.

The catalysed reaction is (R)-S-lactoylglutathione = methylglyoxal + glutathione. The protein operates within secondary metabolite metabolism; methylglyoxal degradation; (R)-lactate from methylglyoxal: step 1/2. Functionally, catalyzes the conversion of hemimercaptal, formed from methylglyoxal and glutathione, to S-lactoylglutathione. This Pinus strobus (Eastern white pine) protein is Putative lactoylglutathione lyase.